An 825-amino-acid chain; its full sequence is Ent-copalyl diphosphate synthase 2, chloroplastic (825 aa).

The transit peptide at 1-70 (MVLSSSCTTV…KGSSLTPIVR (70 aa)) directs the protein to the chloroplast. Residue lysine 241 coordinates substrate. A DXDD motif motif is present at residues 373-376 (EVDD). Lysine 459 is a substrate binding site.

This sequence belongs to the terpene synthase family. Tpsc subfamily. It depends on Mg(2+) as a cofactor. Expressed in tassels.

It localises to the plastid. It is found in the chloroplast. The enzyme catalyses (2E,6E,10E)-geranylgeranyl diphosphate = ent-copalyl diphosphate. The protein operates within plant hormone biosynthesis; gibberellin biosynthesis. Functionally, involved in gibberellin biosynthesis. Catalyzes the conversion of geranylgeranyl diphosphate to the gibberellin precursor ent-copalyl diphosphate (ent-CPP). Involved in the production of antifungal dolabralexin phytoalexins in response to biotic and abiotic stresses. In response to fungal infection and in associtation with KSL4, is involved in the production dolabradiene, a type of antifungal phytoalexin. The chain is Ent-copalyl diphosphate synthase 2, chloroplastic from Zea mays (Maize).